The following is a 479-amino-acid chain: Neuronal acetylcholine receptor subunit alpha-9 (479 aa).

The first 22 residues, methionine 1–alanine 22, serve as a signal peptide directing secretion. The Extracellular portion of the chain corresponds to alanine 23–serine 238. The N-linked (GlcNAc...) asparagine glycan is linked to asparagine 57. A disulfide bridge links cysteine 155 with cysteine 169. A glycan (N-linked (GlcNAc...) asparagine) is linked at asparagine 170. Na(+) is bound by residues serine 191 and aspartate 193. Cysteines 219 and 220 form a disulfide. The next 3 membrane-spanning stretches (helical) occupy residues phenylalanine 239 to phenylalanine 259, valine 269 to isoleucine 289, and tyrosine 303 to isoleucine 323. Topologically, residues histidine 324–arginine 457 are cytoplasmic. The chain crosses the membrane as a helical span at residues phenylalanine 458–alanine 478.

This sequence belongs to the ligand-gated ion channel (TC 1.A.9) family. Acetylcholine receptor (TC 1.A.9.1) subfamily. Alpha-9/CHRNA9 sub-subfamily. As to quaternary structure, forms homo- or heteropentameric channels in conjunction with CHRNA10. The native outer hair cell receptor is composed of CHRNA9:CHRNA10 heterooligomers. Found in the stoichiometric form (CHRNA9)2:(CHRNA10)3. In terms of processing, N-glycosylated. In terms of tissue distribution, expressed in cochlea, keratinocytes, pituitary gland, B-cells and T-cells.

The protein localises to the synaptic cell membrane. The protein resides in the cell membrane. It carries out the reaction Ca(2+)(in) = Ca(2+)(out). The enzyme catalyses K(+)(in) = K(+)(out). It catalyses the reaction Na(+)(in) = Na(+)(out). The catalysed reaction is Mg(2+)(in) = Mg(2+)(out). Its activity is regulated as follows. Activated by a myriad of ligands such as acetylcholine. AChR activity is inhibited by the antagonist alpha-conotoxins RgIA and GeXXA, small disulfide-constrained peptides from cone snails. Functionally, component of neuronal acetylcholine receptors (nAChRs) that function as pentameric, ligand-gated cation channels with high calcium permeability among other activities. nAChRs are excitatory neurotrasnmitter receptors formed by a collection of nAChR subunits known to mediate synaptic transmission in the nervous system and the neuromuscular junction. Each nAchR subunit confers differential attributes to channel properties, including activation, deactivation and desensitization kinetics, pH sensitivity, cation permeability, and binding to allosteric modulators. Forms either homopentamers or heteropentamers with CHRNA10. Expressed in the inner ear, in sympathetic neurons and in other non-neuronal cells, such as skin keratinocytes and lymphocytes. nAChR formed by CHRNA9:CHRNA10 mediate central nervous system control of auditory and vestibular sensory processing. The channel is permeable to a range of divalent cations including calcium, the influx of which may activate a potassium current which hyperpolarizes the cell membrane. In the ear, mediates synaptic transmission between efferent olivocochlear fibers and hair cells of the cochlea, this may lead to a reduction in basilar membrane motion, altering the activity of auditory nerve fibers and reducing the range of dynamic hearing. This may protect against acoustic trauma. May also regulate keratinocyte adhesion. This Homo sapiens (Human) protein is Neuronal acetylcholine receptor subunit alpha-9.